A 334-amino-acid polypeptide reads, in one-letter code: MAVAAVGRPRALRCPLLLLLSLLLVAGPALGWNDPDRILLRDVKALTLYSDRYTTSRRLDPIPQLKCVGGTAGCEAYTPRVIQCQNKGWDGYDVQWECKTDLDIAYKFGKTVVSCEGYESSEDQYVLRGSCGLEYNLDYTELGLKKLKESGKHQGFSDYYHKLYSSDSCGFITIAVLFVLAFAVYKLFLSDGQGSPPPYSEHPPYSEHSQRFASAAGAPPPGFKSEFTGPQNTGYGASSGFGSAFGGQGYGSSGPGFWSGLGAGGLLGYLFGSNRAATPFSDSWYHPAYPPSHSGAWNSRAYSPLGGGAGSYCASSNADSRTRTASGYGGTRRR.

Residues 1–31 (MAVAAVGRPRALRCPLLLLLSLLLVAGPALG) form the signal peptide. Over 32-168 (WNDPDRILLR…YYHKLYSSDS (137 aa)) the chain is Lumenal. The helical transmembrane segment at 169–189 (CGFITIAVLFVLAFAVYKLFL) threads the bilayer. The Cytoplasmic portion of the chain corresponds to 190 to 334 (SDGQGSPPPY…ASGYGGTRRR (145 aa)). Disordered regions lie at residues 198–219 (PYSE…AGAP) and 310–334 (GSYC…TRRR). Positions 313–325 (CASSNADSRTRTA) are enriched in polar residues.

The protein belongs to the SARAF family. Interacts with STIM1; the interaction is inhibited by the interaction of STIM1 with EFHB.

The protein resides in the endoplasmic reticulum membrane. Negative regulator of store-operated Ca(2+) entry (SOCE) involved in protecting cells from Ca(2+) overfilling. In response to cytosolic Ca(2+) elevation after endoplasmic reticulum Ca(2+) refilling, promotes a slow inactivation of STIM (STIM1 or STIM2)-dependent SOCE activity: possibly act by facilitating the deoligomerization of STIM to efficiently turn off ORAI when the endoplasmic reticulum lumen is filled with the appropriate Ca(2+) levels, and thus preventing the overload of the cell with excessive Ca(2+) ions. The chain is Store-operated calcium entry-associated regulatory factor (Saraf) from Mus musculus (Mouse).